Consider the following 165-residue polypeptide: Chorismate pyruvate-lyase (165 aa).

Substrate contacts are provided by methionine 35, arginine 77, leucine 115, and glutamate 156.

The protein belongs to the UbiC family. As to quaternary structure, monomer.

It is found in the cytoplasm. The catalysed reaction is chorismate = 4-hydroxybenzoate + pyruvate. It participates in cofactor biosynthesis; ubiquinone biosynthesis. In terms of biological role, removes the pyruvyl group from chorismate, with concomitant aromatization of the ring, to provide 4-hydroxybenzoate (4HB) for the ubiquinone pathway. The protein is Chorismate pyruvate-lyase of Salmonella schwarzengrund (strain CVM19633).